The primary structure comprises 379 residues: tRNA-specific 2-thiouridylase MnmA (379 aa).

Residues 23–30 and L49 each bind ATP; that span reads AMSGGVDS. C117 (nucleophile) is an active-site residue. A disulfide bridge connects residues C117 and C214. Position 141 (G141) interacts with ATP. An interaction with tRNA region spans residues 163 to 165; sequence RDQ. C214 serves as the catalytic Cysteine persulfide intermediate.

Belongs to the MnmA/TRMU family.

The protein resides in the cytoplasm. The enzyme catalyses S-sulfanyl-L-cysteinyl-[protein] + uridine(34) in tRNA + AH2 + ATP = 2-thiouridine(34) in tRNA + L-cysteinyl-[protein] + A + AMP + diphosphate + H(+). Its function is as follows. Catalyzes the 2-thiolation of uridine at the wobble position (U34) of tRNA, leading to the formation of s(2)U34. The polypeptide is tRNA-specific 2-thiouridylase MnmA (Cereibacter sphaeroides (strain ATCC 17023 / DSM 158 / JCM 6121 / CCUG 31486 / LMG 2827 / NBRC 12203 / NCIMB 8253 / ATH 2.4.1.) (Rhodobacter sphaeroides)).